A 220-amino-acid polypeptide reads, in one-letter code: Tumor protein p53-inducible nuclear protein 2 (220 aa).

The span at 1–12 (MFQRLSSLFFST) shows a compositional bias: low complexity. Disordered regions lie at residues 1–24 (MFQR…CPRA), 41–69 (PDSY…LMDE), and 119–220 (PGSP…QFNY). Ser-14 is modified (phosphoserine). The LIR signature appears at 26–41 (VSEEDEVDGWLIIDLP). Pro residues predominate over residues 47-64 (PPSPGAAPAPAGRPPPAP). Phosphoserine is present on Ser-136. The span at 152 to 170 (HAAPLPARAALLEKAGQVR) shows a compositional bias: low complexity. Polar residues predominate over residues 205-220 (NQSSFIYQPCQRQFNY).

As to quaternary structure, interacts with VMP1, GABARAP, GABARAPL1, GABARAPL2, MAP1LC3A, MAP1LC3B, MAP1LC3C and THRA.

The protein localises to the cytoplasm. The protein resides in the cytosol. It localises to the nucleus. It is found in the PML body. Its subcellular location is the cytoplasmic vesicle. The protein localises to the autophagosome. Dual regulator of transcription and autophagy. Positively regulates autophagy and is required for autophagosome formation and processing. May act as a scaffold protein that recruits MAP1LC3A, GABARAP and GABARAPL2 and brings them to the autophagosome membrane by interacting with VMP1 where, in cooperation with the BECN1-PI3-kinase class III complex, they trigger autophagosome development. Acts as a transcriptional activator of THRA. This chain is Tumor protein p53-inducible nuclear protein 2 (TP53INP2), found in Homo sapiens (Human).